Consider the following 314-residue polypeptide: Probable manganese-dependent inorganic pyrophosphatase (314 aa).

Residues histidine 7, aspartate 11, aspartate 13, aspartate 72, histidine 94, and aspartate 146 each contribute to the Mn(2+) site.

It belongs to the PPase class C family. Mn(2+) serves as cofactor.

It localises to the cytoplasm. The enzyme catalyses diphosphate + H2O = 2 phosphate + H(+). The chain is Probable manganese-dependent inorganic pyrophosphatase (ppaC) from Deinococcus radiodurans (strain ATCC 13939 / DSM 20539 / JCM 16871 / CCUG 27074 / LMG 4051 / NBRC 15346 / NCIMB 9279 / VKM B-1422 / R1).